Consider the following 247-residue polypeptide: uncharacterized protein (247 aa).

The next 6 helical transmembrane spans lie at 19-39 (IFFT…SIMF), 73-93 (FFTS…AFFI), 106-126 (FLSF…YFII), 155-175 (YIQF…CPLF), 196-216 (YIYF…ILSQ), and 217-237 (FFLF…SCFY).

It belongs to the TatC family.

Its subcellular location is the mitochondrion membrane. This is an uncharacterized protein from Nephroselmis olivacea (Green alga).